A 380-amino-acid chain; its full sequence is Queuine tRNA-ribosyltransferase (380 aa).

The active-site Proton acceptor is Asp-95. Residues 95-99 (DSGGF), Asp-149, Gln-192, and Gly-219 each bind substrate. An RNA binding region spans residues 250-256 (GVGSPDA). Asp-269 acts as the Nucleophile in catalysis. The RNA binding; important for wobble base 34 recognition stretch occupies residues 274-278 (TRIAR). Residues Cys-307, Cys-309, Cys-312, and His-338 each contribute to the Zn(2+) site.

It belongs to the queuine tRNA-ribosyltransferase family. Homodimer. Within each dimer, one monomer is responsible for RNA recognition and catalysis, while the other monomer binds to the replacement base PreQ1. Requires Zn(2+) as cofactor.

It carries out the reaction 7-aminomethyl-7-carbaguanine + guanosine(34) in tRNA = 7-aminomethyl-7-carbaguanosine(34) in tRNA + guanine. It participates in tRNA modification; tRNA-queuosine biosynthesis. In terms of biological role, catalyzes the base-exchange of a guanine (G) residue with the queuine precursor 7-aminomethyl-7-deazaguanine (PreQ1) at position 34 (anticodon wobble position) in tRNAs with GU(N) anticodons (tRNA-Asp, -Asn, -His and -Tyr). Catalysis occurs through a double-displacement mechanism. The nucleophile active site attacks the C1' of nucleotide 34 to detach the guanine base from the RNA, forming a covalent enzyme-RNA intermediate. The proton acceptor active site deprotonates the incoming PreQ1, allowing a nucleophilic attack on the C1' of the ribose to form the product. After dissociation, two additional enzymatic reactions on the tRNA convert PreQ1 to queuine (Q), resulting in the hypermodified nucleoside queuosine (7-(((4,5-cis-dihydroxy-2-cyclopenten-1-yl)amino)methyl)-7-deazaguanosine). This Latilactobacillus sakei subsp. sakei (strain 23K) (Lactobacillus sakei subsp. sakei) protein is Queuine tRNA-ribosyltransferase.